Reading from the N-terminus, the 512-residue chain is Mucin-13 (512 aa).

Residues 1-18 form the signal peptide; the sequence is MKAIIHLTLLALLSVNTA. Residues 19–421 are Extracellular-facing; it reads TNQGNSADAV…GLDCKDKFQL (403 aa). The segment covering 22–38 has biased composition (polar residues); that stretch reads GNSADAVTTTETATSGP. Disordered stretches follow at residues 22–67 and 133–176; these read GNSA…PTAT and MVPS…PSNP. Residues 53-67 show a composition bias toward low complexity; it reads TASTTANTPSFPTAT. The span at 135–176 shows a compositional bias: polar residues; the sequence is PSETQSNNEMSPTTEDNQSSGPPTGTALLETSTLNSTGPSNP. N-linked (GlcNAc...) asparagine glycans are attached at residues N151 and N169. Residues 173–211 form the EGF-like 1 domain; it reads PSNPCQDDPCADNSLCVKLHNTSFCLCLEGYYYNSSTCK. 3 disulfide bridges follow: C177/C188, C182/C197, and C199/C210. N-linked (GlcNAc...) asparagine glycosylation is found at N193, N206, N284, and N332. One can recognise an SEA domain in the interval 212–336; the sequence is KGKVFPGKIS…DYYGCNQTAD (125 aa). EGF-like domains follow at residues 322 to 361 and 363 to 404; these read LTLRCDYYGCNQTADDCLNGLACDCKSDLQRPNPQSPFCV and SSLK…GNCQ. Intrachain disulfides connect C326-C338, C331-C344, C346-C360, C367-C378, C371-C389, and C391-C403. Residues 422-442 traverse the membrane as a helical segment; the sequence is ILTIVGTIAGIVILSMIIALI. The Cytoplasmic segment spans residues 443–512; the sequence is VTARSNNKTK…RHSSMPRPDY (70 aa). Over residues 493–505 the composition is skewed to polar residues; the sequence is RDSQMQNPYSRHS. Residues 493-512 form a disordered region; sequence RDSQMQNPYSRHSSMPRPDY.

As to quaternary structure, homodimer of beta subunits. Post-translationally, cleaved into two subunits, alpha and beta, probably between the first EGF domain and the SEA domain. Beta subunit contains the cytoplasmic tail and alpha subunit the extracellular tail. The homooligomerization into dimers is dependent on intrachain disulfide bonds. In terms of processing, highly N-glycosylated. In terms of tissue distribution, highly expressed in epithelial tissues, particularly those of the gastrointestinal and respiratory tracts, such as large intestine and trachea, followed by kidney, small intestine, appendix and stomach.

It localises to the cell membrane. It is found in the apical cell membrane. The protein localises to the secreted. In terms of biological role, epithelial and hemopoietic transmembrane mucin that may play a role in cell signaling. This is Mucin-13 (MUC13) from Homo sapiens (Human).